Reading from the N-terminus, the 217-residue chain is Guanylate kinase (217 aa).

The 181-residue stretch at 10-190 (GLLIILSSPS…TEEALKTIIT (181 aa)) folds into the Guanylate kinase-like domain. 17–24 (SPSGAGKS) is a binding site for ATP.

This sequence belongs to the guanylate kinase family.

It is found in the cytoplasm. It carries out the reaction GMP + ATP = GDP + ADP. Its function is as follows. Essential for recycling GMP and indirectly, cGMP. In Ruegeria sp. (strain TM1040) (Silicibacter sp.), this protein is Guanylate kinase.